Consider the following 570-residue polypeptide: MFSFFFSFYALSVIFSLLFKHFLSSKGVFLLNTTSIGLFWAYSLSNLNLFFIKNKLIAIHLFRWFPLSAGYLVNFSFYIDTVAYSFTLLTLTIGVFVNLYTYSYFRYEPHISRLISLINAFIASMIILVNSGNLVVFFFGWELIGITSFFLINFWGERAPTFKSAFKAFSFNKFSDSAVLIALILIYANVHDLNFEAILNVSHLYSEMKLGSTPQINSWNLISFCLLFAAFVKSAQFGFHVWLPDSMEAPVPASALIHSATLVSAGVFLIMRFYPILELSLYFKLVTALVGALTALAGGLSAVFQTDLKKILAYSTISHCGFLIFLCSFGNFKLVIVYLFVHGFFKAISFLCVGNLIRFSKSYQDLRRMGSFFKYLPAEFFFLVFSLLNLSGLPFFFGFYSKTLLFMISDVLYFRDAIFCMILLSCITGLFYSFNILYYSFFDSKKARKSIYAGVISEYLRSYYYSNTTMASNIAIFLLIVSSCLLCAYLINFYLLSLSTATDFYLVYVKTFSFTLAPLSEAALLNYSFFYWIIAIFFVILVLFSYYQKKTTAEVSLAGFFDFFLGGFFF.

A run of 16 helical transmembrane segments spans residues 2–22, 27–47, 56–76, 77–97, 109–129, 134–154, 179–199, 221–241, 251–271, 285–305, 311–330, 335–357, 380–400, 417–437, 476–496, and 524–544; these read FSFF…FKHF, GVFL…LSNL, LIAI…VNFS, FYID…GVFV, PHIS…IILV, LVVF…LINF, VLIA…EAIL, LISF…GFHV, VPAS…FLIM, LVTA…AVFQ, ILAY…CSFG, VIVY…GNLI, FFFL…FGFY, AIFC…FNIL, IFLL…FYLL, and LLNY…LVLF.

Belongs to the complex I subunit 5 family.

Its subcellular location is the mitochondrion inner membrane. It catalyses the reaction a ubiquinone + NADH + 5 H(+)(in) = a ubiquinol + NAD(+) + 4 H(+)(out). Functionally, core subunit of the mitochondrial membrane respiratory chain NADH dehydrogenase (Complex I) that is believed to belong to the minimal assembly required for catalysis. Complex I functions in the transfer of electrons from NADH to the respiratory chain. The immediate electron acceptor for the enzyme is believed to be ubiquinone. The sequence is that of NADH-ubiquinone oxidoreductase chain 5 (ND5) from Paramecium tetraurelia.